A 133-amino-acid chain; its full sequence is Large-conductance mechanosensitive channel (133 aa).

Transmembrane regions (helical) follow at residues 10 to 30 (FAVK…AAFG) and 76 to 96 (GIFV…FLVV).

Belongs to the MscL family. As to quaternary structure, homopentamer.

The protein resides in the cell inner membrane. In terms of biological role, channel that opens in response to stretch forces in the membrane lipid bilayer. May participate in the regulation of osmotic pressure changes within the cell. The protein is Large-conductance mechanosensitive channel of Chlorobium phaeobacteroides (strain BS1).